Reading from the N-terminus, the 118-residue chain is Thioredoxin AMT13 (118 aa).

One can recognise a Thioredoxin domain in the interval M1 to G110. C36 and C39 are oxidised to a cystine.

The protein belongs to the thioredoxin family.

It functions in the pathway mycotoxin biosynthesis. In terms of biological role, thioredoxin; part of the gene clusters that mediate the biosynthesis of AM-toxins, host-selective toxins (HSTs) causing Alternaria blotch on apple, a worldwide distributed disease. AM-toxins are cyclic depsipeptides containing the 3 residues 2-hydroxy-isovaleric acid (2-HIV), dehydroalanine, L-alanine which are common for all 3 AM-toxins I to III. The fourth precursor is L-alpha-amino-methoxyphenyl-valeric acid (L-Amv) for AM-toxin I, L-alpha-amino-phenyl-valeric acid (L-Apv) for AM-toxin II, and L-alpha-amino-hydroxyphenyl-valeric acid (L-Ahv) for AM-toxin III. AM-toxins have two target sites for affecting susceptible apple cells; they cause invagination of the plasma membrane and electrolyte loss and chloroplast disorganization. The non-ribosomal peptide synthetase AMT1 contains 4 catalytic modules and is responsible for activation of each residue in AM-toxin. The aldo-keto reductase AMT2 catalyzes the conversion of 2-keto-isovaleric acid (2-KIV) to 2-hydroxy-isovaleric acid (2-HIV), one of the precursor residues incorporated by AMT1 during AM-toxin biosynthesis, by reduction of its ketone to an alcohol. The cytochrome P450 monooxygenase AMT3 and the thioesterase AMT4 are also important for AM-toxin production, but their exact function within the AM-toxin biosynthesis are not known yet. Up to 21 proteins (including AMT1 to AMT4) are predicted to be involved in AM-toxin biosynthesis since their expression ishighly up-regulated in AM-toxin-producing cultures. The chain is Thioredoxin AMT13 from Alternaria alternata (Alternaria rot fungus).